Consider the following 607-residue polypeptide: V-type proton ATPase catalytic subunit A (607 aa).

246–253 (GAFGCGKT) contributes to the ATP binding site.

It belongs to the ATPase alpha/beta chains family. As to quaternary structure, V-ATPase is a heteromultimeric enzyme composed of a peripheral catalytic V1 complex (components A to H) attached to an integral membrane V0 proton pore complex (components: a, c, c', c'', d, e, f and VOA1).

It is found in the vacuole membrane. The enzyme catalyses ATP + H2O + 4 H(+)(in) = ADP + phosphate + 5 H(+)(out). In terms of biological role, catalytic subunit of the V1 complex of vacuolar(H+)-ATPase (V-ATPase), a multisubunit enzyme composed of a peripheral complex (V1) that hydrolyzes ATP and a membrane integral complex (V0) that translocates protons. V-ATPase is responsible for acidifying and maintaining the pH of intracellular compartments. This is V-type proton ATPase catalytic subunit A (vma-1) from Neurospora crassa (strain ATCC 24698 / 74-OR23-1A / CBS 708.71 / DSM 1257 / FGSC 987).